Consider the following 591-residue polypeptide: Eukaryotic translation initiation factor 3 subunit D (591 aa).

The segment at 100 to 159 (SGGNPDEDAAFRLVDGKPPPRPKFGPKWRFNPHHNRNQLPQRRDEEVEAKKRDAEKERAR) is disordered. Residues 123–135 (FGPKWRFNPHHNR) show a composition bias toward basic residues. The segment covering 140 to 159 (QRRDEEVEAKKRDAEKERAR) has biased composition (basic and acidic residues). Residues 309–323 (QLDLLSVHETSQEPL) form an RNA gate region. Acidic residues predominate over residues 549 to 560 (DYVEEPLPEDEQ). Residues 549–591 (DYVEEPLPEDEQVQPTEENTEGAEASVAATKETEEKKADDAQA) are disordered. Over residues 579–591 (KETEEKKADDAQA) the composition is skewed to basic and acidic residues.

This sequence belongs to the eIF-3 subunit D family. As to quaternary structure, component of the eukaryotic translation initiation factor 3 (eIF-3) complex, which is composed of at least 13 different subunits.

The protein resides in the cytoplasm. Functionally, mRNA cap-binding component of the eukaryotic translation initiation factor 3 (eIF-3) complex, which is involved in protein synthesis of a specialized repertoire of mRNAs and, together with other initiation factors, stimulates binding of mRNA and methionyl-tRNAi to the 40S ribosome. The eIF-3 complex specifically targets and initiates translation of a subset of mRNAs involved in cell proliferation. In the eIF-3 complex, eif3d specifically recognizes and binds the 7-methylguanosine cap of a subset of mRNAs. In Arabidopsis thaliana (Mouse-ear cress), this protein is Eukaryotic translation initiation factor 3 subunit D (TIF3D1).